Reading from the N-terminus, the 371-residue chain is Envelope glycoprotein M (371 aa).

Residues 1–13 are Intravirion-facing; it reads MAPSHVDKVNTRT. Residues 14-34 traverse the membrane as a helical segment; the sequence is WSASIVFMVLTFVNVSVHLVL. Topologically, residues 35–79 are virion surface; sequence SNFPHLGYPCVYYHVVDFERLNMSAYNVMHLHTPMLFLDSVQLVC. A helical transmembrane segment spans residues 80–100; it reads YAVFMQLVFLAVTIYYLVCWI. Residues 101-126 lie on the Intravirion side of the membrane; the sequence is KISMRKDKGMSLNQSTRDISYMGDSL. The chain crosses the membrane as a helical span at residues 127-147; it reads TAFLFILSMDTFQLFTLTMSF. Residues 148–151 lie on the Virion surface side of the membrane; sequence RLPS. A helical membrane pass occupies residues 152–172; sequence MIAFMAAVHFFCLTIFNVSMV. At 173–200 the chain is on the intravirion side; that stretch reads TQYRSYKRSLFFFSRLHPKLKGTVQFRT. Residues 201 to 221 form a helical membrane-spanning segment; the sequence is LIVNLVEVALGFNTTVVAMAL. The Virion surface portion of the chain corresponds to 222–239; that stretch reads CYGFGNNFFVRTGHMVLA. The chain crosses the membrane as a helical span at residues 240-260; sequence VFVVYAIISIIYFLLIEAVFF. Residues 261–264 are Intravirion-facing; sequence QYVK. A helical membrane pass occupies residues 265–285; that stretch reads VQFGYHLGAFFGLCGLIYPIV. Over 286–298 the chain is Virion surface; the sequence is QYDTFLSNEYRTG. A helical transmembrane segment spans residues 299 to 319; sequence ISWSFGMLFFIWAMFTTCRAV. The Intravirion portion of the chain corresponds to 320-371; that stretch reads RYFRGRGSGSVKYQALATASGEEVAALSHHDSLESRRLREEEDDDDEDFEDA. A disordered region spans residues 346–371; it reads LSHHDSLESRRLREEEDDDDEDFEDA. Positions 347 to 359 are enriched in basic and acidic residues; sequence SHHDSLESRRLRE. Positions 360–371 are enriched in acidic residues; the sequence is EEDDDDEDFEDA.

This sequence belongs to the herpesviridae glycoprotein M family. As to quaternary structure, interacts (via N-terminus) with gN (via N-terminus). The gM-gN heterodimer forms the gCII complex.

The protein localises to the virion membrane. The protein resides in the host Golgi apparatus. Its subcellular location is the host trans-Golgi network. It is found in the host endosome membrane. It localises to the host nucleus inner membrane. Its function is as follows. Envelope glycoprotein important for virion assembly and egress. Plays a role in the correct incorporation of gH-gL into virion membrane. Directs the glycoprotein N (gN) to the host trans-Golgi network. The polypeptide is Envelope glycoprotein M (Homo sapiens (Human)).